The chain runs to 211 residues: Transcriptional regulator GfcR (211 aa).

The protein belongs to the purine/pyrimidine phosphoribosyltransferase family. GfcR subfamily.

Functionally, DNA-binding transcriptional regulator that functions as a regulator of central sugar catabolic pathways. The sequence is that of Transcriptional regulator GfcR from Halorubrum lacusprofundi (strain ATCC 49239 / DSM 5036 / JCM 8891 / ACAM 34).